The sequence spans 1242 residues: MTSINKVPPSIYTRSCPNCGGNISSQRLFNGSVCESCLKDDREFSNLSDLINILSENSNLKNLTQIRDVLEEYKKVEEIFGKLLNNSKPIGPQRSWTIRFLRGESFAIIAPPGLGKTTFGLIMSLYNATRNRKSIIIFPTRTLISQTVDKLAKFSELYSYSPRILYNKQSPTQTENILDQLKSGNFDIFISTNRFVIQNLSELSNIKFDFIFVDDVDAALKSGKSAKAILRLVGFTDEDIQTTMKLLRENIGEEEKFGKIQEIRESRLKDKIVIFSSATISRGNPILSSLMGFRPGSSVIYLRNIYDSYIDLTQTCKGQDFEECTLGTVIKLLKRLNDGTLIFVPIDKGAQYADYLASNLRDHGINVESVASSSISKLEKFERGEVSSLVGVATHYGVLVRGIDLPWRVKYSIFVGIPKFKFKIGEYMHPLALTRLLSLVYLVKNDDKVRGLLSYIRKRLRKISPAALAMLAKDIREGKIDDERLKEAYNLVNEYLKDNEFLKKVSDVGDLVIEGDYILMPDYLTYIQASGRTSRLYGANLTTGLSVLLIDNSRLFELLNKKLNLILDEVKWYSLDIDADKLGQVSLSDISAKITEERESLSKIKKEGNVESSSLSVKTTLFIVESPNKAKTISNFFSRPSTRSYGKLRVYETVLGDRVLIVAASGGHIYDLITEDESEKQDDNYVYGVLVKDSKFIPIYSTIKKCEKGHQIVKDLSQNKCPICGSRIVTDKTEVVDILRKLALEVDEVLIGTDPDTEGEKIAWDIYLAIRPFNGNIKRAEFHEVTRRAILNAIKNPREFNDNLVKSQIVRRIEDRWIGFKLSRKLQTEFWEQHCTSISKKNSKDEECKENRNLSAGRVQTPVLDWVVNRYQKYNENKKKYLIIESQDKSIFPFSVLALKKNGLSKNTQIIIHLEDINIKEEEFGPLPPYTTDTLLSDAANLLRIPASDTMRVAQDLFELGLITYHRTDSTRVSNVGISVAETYLKSKQVDISKIFRPRSWGEGGAHEAIRPTKPLDETMLKASIEQGDLELSKQLTFNHFRVYNLIFRRFITSQLPPLVVTKQIVRIRAYTKDNIELELDENKKEFVIGYKLKEGDEFRQTLQDAIYTLFRLYQPLDEKMKGKELSATITGTLNKSDVQLYTEGELISEMKSKQIGRPSTYAVIISTLKKRRYIIESKNLKKIIPTKLGMAVKEYLMENYKQIVSEKRTVKLLEKMNEVEEGKVDYLVLLKELYNEIQTIS.

The segment at 6–46 (KVPPSIYTRSCPNCGGNISSQRLFNGSVCESCLKDDREFSN) adopts an RG N-terminal-type zinc-finger fold. Positions 16, 19, 34, and 37 each coordinate Zn(2+). ATP contacts are provided by residues Gln93 and 110 to 117 (APPGLGKT). Residues 97-298 (TIRFLRGESF…SLMGFRPGSS (202 aa)) enclose the Helicase ATP-binding domain. The DEAD box signature appears at 214-217 (DDVD). The interval 615-1242 (LSVKTTLFIV…ELYNEIQTIS (628 aa)) is topoisomerase I. Residues 619–785 (TTLFIVESPN…NIKRAEFHEV (167 aa)) form the Toprim domain. A Mg(2+)-binding site is contributed by Glu625. The RG C-terminal-type; atypical zinc finger occupies 703–731 (IKKCEKGHQIVKDLSQNKCPICGSRIVTD). Positions 706, 710, 721, and 724 each coordinate Zn(2+). Asp754 serves as a coordination point for Mg(2+). Residues 801–1242 (NDNLVKSQIV…ELYNEIQTIS (442 aa)) enclose the Topo IA-type catalytic domain. Tyr965 functions as the O-(5'-phospho-DNA)-tyrosine intermediate in the catalytic mechanism.

In the N-terminal section; belongs to the DEAD box helicase family. DDVD subfamily. This sequence in the C-terminal section; belongs to the type IA topoisomerase family. As to quaternary structure, monomer. The cofactor is Zn(2+). Mg(2+) serves as cofactor.

It is found in the cytoplasm. The catalysed reaction is ATP + H2O = ADP + phosphate + H(+). Its activity is regulated as follows. At least one of the two reverse gyrase proteins is inhibited by actinomycin D. Highly sensitive to NaCl concentrations, maximal positive supercoiling is observed with 10 mM NaCl; as NaCl rises, supercoiling decreases. At 300 mM NaCl relaxes but does not introduce positive supercoils into negatively supercoiled substrate, at 400 mM NaCl does not relax DNA. Its function is as follows. Modifies the topological state of DNA by introducing positive supercoils in an ATP-dependent process. Increases the linking number in steps of +1. Involved in homeostatic control of DNA topology in balance with type II topoisomerase 6 (TopoVI); levels of TopoVI are constant at 80 and 88 degrees Celsius and TopoVI is probably less active at 88 degrees (characterized enzyme is from S.shibatae B12), so reverse gyrase mediates most of the fine-tuning of DNA topology. Changes the DNA linking number step-by-step in a distributive manner. At low protein to DNA ratios mostly relaxes negatively supercoiled substrate, as ratios rise more positive supercoils are introduced. At 90 degrees Celsius introduces 19 positive supercoils into pTZ18R DNA (probably 2860 bp), less than TopR2. Relaxes negatively supercoiled DNA in the absence of ATP. It cleaves transiently a single DNA strand and remains covalently bound to the 5' DNA end through a tyrosine residue. May be involved in DNA damage response. Its activity is inhibited by the DNA-binding protein 7d (Sso7d), suggesting that the Sso7d activity might counteract the overwinding effect of reverse gyrase. Resolves 4-way Holliday junctions (HJ) with 20 bases in each arm in vitro, distorting the junction. Very high protein levels are required, but total enzyme content of the cell (there are 2 reverse gyrases in this organism) is estimated to be 20-200 molecules/cell. HJ resolution does not require either ATPase activity or the active tyrosine. The individual domains do not resolve HJs but do so when mixed. Also unwinds a fork substrate. In terms of biological role, there are 2 genes for this protein in the cell. During exponential growth this is the less expressed isoform (about 52 molecules per cell at 80 degrees Celsius, about 28 molecules at 88 degrees Celsius); this isoform is more active at higher temperature. Grows actively at both 80 and 88 degrees Celsius; survives a long exposure at 45 degrees Celsius without DNA replication or cell division occurring. Experiments using whole cell extracts do not distinguish which isoform is present, the results are probably a mixture of the two forms. This is Reverse gyrase 1 from Saccharolobus solfataricus (strain ATCC 35092 / DSM 1617 / JCM 11322 / P2) (Sulfolobus solfataricus).